The chain runs to 235 residues: Hydroxyacylglutathione hydrolase (235 aa).

Residues histidine 53, histidine 55, aspartate 57, histidine 58, histidine 109, aspartate 127, and histidine 165 each coordinate Zn(2+).

Belongs to the metallo-beta-lactamase superfamily. Glyoxalase II family. In terms of assembly, monomer. The cofactor is Zn(2+).

The catalysed reaction is an S-(2-hydroxyacyl)glutathione + H2O = a 2-hydroxy carboxylate + glutathione + H(+). Its pathway is secondary metabolite metabolism; methylglyoxal degradation; (R)-lactate from methylglyoxal: step 2/2. Thiolesterase that catalyzes the hydrolysis of S-D-lactoyl-glutathione to form glutathione and D-lactic acid. This chain is Hydroxyacylglutathione hydrolase, found in Haemophilus ducreyi (strain 35000HP / ATCC 700724).